A 345-amino-acid polypeptide reads, in one-letter code: Membrane progestin receptor gamma-A (345 aa).

The Cytoplasmic portion of the chain corresponds to 1 to 52 (MLNLIKLPQVFTINQVPKVFHEDGIISGYRHPCSSAKDCVLSLFQLTNETLN). A helical membrane pass occupies residues 53-73 (IWTHFLPTWFFLWKLLTVVLV). Over 74-80 (LEDWRDP) the chain is Extracellular. Residues 81–101 (FIWPFLVFLLSCCVYPLASSC) traverse the membrane as a helical segment. The Cytoplasmic portion of the chain corresponds to 102–114 (AHTFSTMSERARH). A helical membrane pass occupies residues 115–135 (ICFFFDYGALSFYSLGSAIIY). The Extracellular segment spans residues 136 to 148 (SSYSFPDKWVNGT). The helical transmembrane segment at 149-169 (FHLNYVSIAVVNSIISTALAC) threads the bilayer. At 170 to 201 (YSRLGLPFLEYNCHSIKRPSGKLDQKLCKCLR) the chain is on the cytoplasmic side. Residues 202 to 222 (IIAFVYPYLFDNIPLFYRIFV) traverse the membrane as a helical segment. The Extracellular portion of the chain corresponds to 223–272 (CAGEGCTVNEANTVHYQHTSLAFFTGFLFATHLPERLAPGSFDYIGHSHQ). A helical membrane pass occupies residues 273–293 (LFHVFAIIGTYFQMTAIELDM). The Cytoplasmic segment spans residues 294–314 (AARKQWLHAHLPPVTFLNTVG). Residues 315–335 (AAFFSVVSGLCIVYVFSLSLF) form a helical membrane-spanning segment. Over 336-345 (STRGVKNKSF) the chain is Extracellular.

This sequence belongs to the ADIPOR family.

It is found in the membrane. Steroid membrane receptor. Binds progesterone. May be involved in oocyte maturation. The protein is Membrane progestin receptor gamma-A (paqr5a) of Danio rerio (Zebrafish).